A 729-amino-acid polypeptide reads, in one-letter code: Kinesin-like protein KAR3 (729 aa).

Residues 1–48 are disordered; the sequence is MESLPRTPTKGRSTQHLSTPSPKNDILAMNGHKRRNTTTPPPKHTLLK. The interval 1–109 is globular; it reads MESLPRTPTK…ENVNELNRTQ (109 aa). Over residues 10-22 the composition is skewed to polar residues; the sequence is KGRSTQHLSTPSP. A coiled-coil region spans residues 110–357; the sequence is AILFEKKATL…LEEYIKDTEL (248 aa). The ATP site is built by asparagine 386, arginine 388, arginine 392, glutamate 454, glycine 477, serine 478, glycine 479, lysine 480, threonine 481, phenylalanine 482, glutamate 554, lysine 579, and threonine 694. The Kinesin motor domain occupies 386–723; the sequence is NIRVYCRIRP…LRFASKVNST (338 aa).

This sequence belongs to the TRAFAC class myosin-kinesin ATPase superfamily. Kinesin family. NCD subfamily. In terms of assembly, interacts with CIK1; the interaction is direct. Interacts with VIK1; the interaction is direct.

The protein localises to the cytoplasm. The protein resides in the cytoskeleton. It is found in the microtubule organizing center. Its subcellular location is the spindle pole body. It localises to the nucleus. The protein localises to the chromosome. The protein resides in the spindle. The catalysed reaction is ATP + H2O = ADP + phosphate + H(+). It catalyses the reaction ATP + H2O + a kinesin associated with a microtubule at position (n) = ADP + phosphate + a kinesin associated with a microtubule at position (n-1, toward the minus end).. Its function is as follows. Minus end-directed microtubule (MT) motor involved in spindle midzone assembly, poleward transport of newly captured kinetochores along the lateral side of MTs, karyogamy (nuclear fusion) during mating, and with an essential function in meiosis I. Functions together with the accessory proteins CIK1 or VIK1. Drives the poleward transport of newly captured kinetochores along the lateral side of MTs, both during S-phase and during M-phase. To contribute to spindle midzone assembly during mitotic metaphase, the nuclear KAR3-CIK1 motor cross-links anti-parallel microtubules to align them on the spindle axis; as the motor travels polewards splayed microtubules are pulled into alignment. During the karyogamy (nuclear fusion) step of mating, KAR3-CIK1 cross-links antiparallel cytoplasmic microtubules emanating from the spindle pole bodies of mating partners; the motor activity of KAR3 creates the force that pulls the nuclei together by sliding cross-linked microtubules past one another. KAR3-CIK1 promotes microtubule shortening predominantly from the microtubule plus-end. Together with cytoplasmic VIK1, may act to stabilize microtubules. Requires accessory protein VIK1 for spindle pole body localization and to allow the CIN8 and KIP1 motors to generate outwardly directed spindle forces. Essential during meiosis I. The ATPase activity is stimulated by microtubule-binding. This chain is Kinesin-like protein KAR3 (KAR3), found in Saccharomyces cerevisiae (strain ATCC 204508 / S288c) (Baker's yeast).